The sequence spans 258 residues: Putative ankyrin repeat domain-containing protein 30B-like (258 aa).

A disordered region spans residues 1–21; the sequence is MERLSAAPVKGQTGPERPSPF. ANK repeat units lie at residues 71–100, 104–133, 137–166, and 170–199; these read KKRTALYWACANGHAEVVTLLVDRKCQLDV, ENRTILMKALQCQREACANILIDSGADPNI, YGNTAVHYAVNSENLSVVAKLLSCGADIEV, and AGHTPLLLAIRKRSEEIVEFLLTKNANANA. A disordered region spans residues 216–258; sequence KISKNSQNSNPEGTSEGTPDEAAPLAERTPDTAESLVERTPDE. The span at 218 to 232 shows a compositional bias: polar residues; that stretch reads SKNSQNSNPEGTSEG. The span at 243-258 shows a compositional bias: basic and acidic residues; that stretch reads RTPDTAESLVERTPDE.

The polypeptide is Putative ankyrin repeat domain-containing protein 30B-like (ANKRD30BL) (Homo sapiens (Human)).